The sequence spans 396 residues: Ornithine aminotransferase (396 aa).

The residue at position 255 (Lys255) is an N6-(pyridoxal phosphate)lysine.

Belongs to the class-III pyridoxal-phosphate-dependent aminotransferase family. OAT subfamily. It depends on pyridoxal 5'-phosphate as a cofactor.

The protein resides in the cytoplasm. It carries out the reaction a 2-oxocarboxylate + L-ornithine = L-glutamate 5-semialdehyde + an L-alpha-amino acid. The protein operates within amino-acid biosynthesis; L-proline biosynthesis; L-glutamate 5-semialdehyde from L-ornithine: step 1/1. In terms of biological role, catalyzes the interconversion of ornithine to glutamate semialdehyde. The sequence is that of Ornithine aminotransferase from Staphylococcus epidermidis (strain ATCC 35984 / DSM 28319 / BCRC 17069 / CCUG 31568 / BM 3577 / RP62A).